The sequence spans 300 residues: MEEPLLHAILGLVLLLSTRTDASAARSKKGPIKEVVMDMAPHSFDDQYQGCIDLMEAELQELNRTEFANETFAEGWRSATEEWQRRWGRVSSPMVLRQDQAIAVLAYTMEGELYRVFNNATLTAGRSRQHYLSSYPFKTLHFLLSRALHTLQESQTQPCHNVFRGVRGTRFTAQQGTVVRFGQFTSSSLQKKVAEFFGLDTFFSVETCYGVPIKDLSTFPGEDEVLIPPFEQFRVTNSTYTAGRSFIQLRSQGKSSTYNCEFVKEKRCKERPCAFSADKSSPLPRSPWPGWAPLAAPHSH.

Positions 1-22 (MEEPLLHAILGLVLLLSTRTDA) are cleaved as a signal peptide. Disulfide bonds link cysteine 51-cysteine 260 and cysteine 159-cysteine 208. One can recognise a TR mART core domain in the interval 70–256 (ETFAEGWRSA…IQLRSQGKSS (187 aa)). 3 residues coordinate NAD(+): tyrosine 107, arginine 164, and glutamine 183. Arginine 164 is an active-site residue. Serine 186 is a catalytic residue. Serine 217 provides a ligand contact to NAD(+). Glutamate 224 is a catalytic residue. Positions 276–300 (SADKSSPLPRSPWPGWAPLAAPHSH) are disordered.

It belongs to the Arg-specific ADP-ribosyltransferase family.

It carries out the reaction L-arginyl-[protein] + NAD(+) = N(omega)-(ADP-D-ribosyl)-L-arginyl-[protein] + nicotinamide + H(+). This chain is Erythroblast NAD(P)(+)--arginine ADP-ribosyltransferase (MADPRT), found in Gallus gallus (Chicken).